Here is a 106-residue protein sequence, read N- to C-terminus: Transcriptional and immune response regulator (106 aa).

As to quaternary structure, monomer. Interacts with NOTCH2 (via ANK repeats), the interaction inhibits the nuclear translocation of NOTCH2 N2ICD. Interacts (C-terminus) with CBY1 (C-terminus), TCIM competes with CTNNB1 for the interaction with CBY1.

The protein resides in the cytoplasm. The protein localises to the nucleus. Its subcellular location is the nucleolus. It localises to the nucleus speckle. Seems to be involved in the regulation of cell growth an differentiation, may play different and opposite roles depending on the tissue or cell type. May enhance the WNT-CTNNB1 pathway by relieving antagonistic activity of CBY1. Enhances the proliferation of follicular dendritic cells. Plays a role in the mitogen-activated MAPK2/3 signaling pathway, positively regulates G1-to-S-phase transition of the cell cycle. In endothelial cells, enhances key inflammatory mediators and inflammatory response through the modulation of NF-kappaB transcriptional regulatory activity. Involved in the regulation of heat shock response, seems to play a positive feedback with HSF1 to modulate heat-shock downstream gene expression. Plays a role in the regulation of hematopoiesis even if the mechanisms are unknown. In cancers such as thyroid or lung cancer, it has been described as promoter of cell proliferation, G1-to-S-phase transition and inhibitor of apoptosis. However, it negatively regulates self-renewal of liver cancer cells via suppresion of NOTCH2 signaling. The polypeptide is Transcriptional and immune response regulator (TCIM) (Bos taurus (Bovine)).